Reading from the N-terminus, the 1032-residue chain is Integrin alpha-4 (1032 aa).

A signal peptide spans 1-33; sequence MAWEARREPGPRRAAVRETVMLLLCLGVPTGRP. FG-GAP repeat units lie at residues 35–100, 110–177, 185–237, 238–291, 292–351, 355–412, and 416–478; these read NVDT…PGQT, NGEP…TELS, QDYV…KYKA, FLDK…EKEL, NILH…GAVM, ETNL…GISS, and QRIE…HPES. Residues 35–977 lie on the Extracellular side of the membrane; it reads NVDTESALLY…HHQRPKRYFT (943 aa). An N-linked (GlcNAc...) asparagine glycan is attached at N79. C91 and C101 are joined by a disulfide. Residue N138 is glycosylated (N-linked (GlcNAc...) asparagine). 2 cysteine pairs are disulfide-bonded: C144–C165 and C183–C198. Residue N229 is glycosylated (N-linked (GlcNAc...) asparagine). D314, N316, D318, D322, D377, D379, D381, D385, D439, D441, N443, Y445, and D447 together coordinate Ca(2+). Residue N480 is glycosylated (N-linked (GlcNAc...) asparagine). 2 disulfides stabilise this stretch: C486/C495 and C501/C557. N518 and N538 each carry an N-linked (GlcNAc...) asparagine glycan. An SG1 motif is present at residues 606 to 616; sequence KKEKDIMKKTI. C622 and C627 form a disulfide bridge. N-linked (GlcNAc...) asparagine glycosylation is found at N626, N645, and N660. C698 and C711 are oxidised to a cystine. N-linked (GlcNAc...) asparagine glycosylation is found at N806 and N821. 2 cysteine pairs are disulfide-bonded: C852–C890 and C897–C902. Residues 978-1001 traverse the membrane as a helical segment; the sequence is IVIISSSLLLGLIVLLLISYVMWK. Residues 1002–1032 are Cytoplasmic-facing; the sequence is AGFFKRQYKSILQEENRRDSWSYINSKSNDD. Residues 1003–1007 carry the GFFKR motif motif; sequence GFFKR. At S1021 the chain carries Phosphoserine.

The protein belongs to the integrin alpha chain family. As to quaternary structure, heterodimer of an alpha and a beta subunit. The alpha subunit can sometimes be cleaved into two non-covalently associated fragments. Alpha-4 associates with either beta-1 or beta-7. Alpha-4 interacts with PXN, LPXN, and TGFB1I1/HIC5. Interacts with CSPG4 through CSPG4 chondroitin sulfate glycosaminoglycan. Interacts with JAML; integrin alpha-4/beta-1 may regulate leukocyte to endothelial cells adhesion by controlling JAML homodimerization. ITGA4:ITGB1 is found in a ternary complex with CX3CR1 and CX3CL1. Interacts with MDK. ITGA4:ITGB1 interacts with MDK; this interaction mediates MDK-induced osteoblast cells migration through PXN phosphorylation. Integrin ITGA4:ITGB1 interacts with SVEP1 (via Sushi domain 21); thereby inhibits Ca(2+) intracellular signaling and as a result represses vasocontraction. ITGA4:ITGB1 interacts with SELP. ITGA4:ITGB1 interacts with BCAM. Phosphorylation on Ser-1027 inhibits PXN binding. Expressed in vascular smooth muscle cells (at protein level).

It localises to the membrane. Its function is as follows. Integrins alpha-4/beta-1 (VLA-4) and alpha-4/beta-7 are receptors for fibronectin. They recognize one or more domains within the alternatively spliced CS-1 and CS-5 regions of fibronectin. They are also receptors for VCAM1. Integrin alpha-4/beta-1 recognizes the sequence Q-I-D-S in VCAM1. Integrin alpha-4/beta-7 is also a receptor for MADCAM1. It recognizes the sequence L-D-T in MADCAM1. On activated endothelial cells integrin VLA-4 triggers homotypic aggregation for most VLA-4-positive leukocyte cell lines. It may also participate in cytolytic T-cell interactions with target cells. ITGA4:ITGB1 binds to fractalkine (CX3CL1) and may act as its coreceptor in CX3CR1-dependent fractalkine signaling. ITGA4:ITGB1 binds to PLA2G2A via a site (site 2) which is distinct from the classical ligand-binding site (site 1) and this induces integrin conformational changes and enhanced ligand binding to site 1. Integrin ITGA4:ITGB1 represses PRKCA-mediated L-type voltage-gated channel Ca(2+) influx and ROCK-mediated calcium sensitivity in vascular smooth muscle cells via its interaction with SVEP1, thereby inhibiting vasocontraction. This chain is Integrin alpha-4 (ITGA4), found in Homo sapiens (Human).